Reading from the N-terminus, the 184-residue chain is uncharacterized protein (184 aa).

The signal sequence occupies residues 1–20 (MKKQILALVCGVIFSSSTWA).

This sequence to E.coli YtfJ.

Its subcellular location is the periplasm. This is an uncharacterized protein from Haemophilus influenzae (strain ATCC 51907 / DSM 11121 / KW20 / Rd).